A 285-amino-acid polypeptide reads, in one-letter code: Dihydropteroate synthase (285 aa).

Residues 18–276 form the Pterin-binding domain; sequence PKIMGIVNLT…DVKATADALK (259 aa). Residue N25 coordinates Mg(2+). Residues T66, D99, N119, D190, K229, and 264–266 contribute to the (7,8-dihydropterin-6-yl)methyl diphosphate site; that span reads RVH.

This sequence belongs to the DHPS family. As to quaternary structure, homodimer. Requires Mg(2+) as cofactor.

It catalyses the reaction (7,8-dihydropterin-6-yl)methyl diphosphate + 4-aminobenzoate = 7,8-dihydropteroate + diphosphate. It functions in the pathway cofactor biosynthesis; tetrahydrofolate biosynthesis; 7,8-dihydrofolate from 2-amino-4-hydroxy-6-hydroxymethyl-7,8-dihydropteridine diphosphate and 4-aminobenzoate: step 1/2. In terms of biological role, catalyzes the condensation of para-aminobenzoate (pABA) with 6-hydroxymethyl-7,8-dihydropterin diphosphate (DHPt-PP) to form 7,8-dihydropteroate (H2Pte), the immediate precursor of folate derivatives. This Neisseria meningitidis serogroup B (strain ATCC BAA-335 / MC58) protein is Dihydropteroate synthase (folP).